The following is a 543-amino-acid chain: Chaperonin GroEL 4 (543 aa).

ATP-binding positions include 29–32 (TLGP), 86–90 (DGTTT), glycine 411, 476–478 (DAA), and aspartate 492.

It belongs to the chaperonin (HSP60) family. Forms a cylinder of 14 subunits composed of two heptameric rings stacked back-to-back. Interacts with the co-chaperonin GroES.

The protein localises to the cytoplasm. The enzyme catalyses ATP + H2O + a folded polypeptide = ADP + phosphate + an unfolded polypeptide.. Functionally, together with its co-chaperonin GroES, plays an essential role in assisting protein folding. The GroEL-GroES system forms a nano-cage that allows encapsulation of the non-native substrate proteins and provides a physical environment optimized to promote and accelerate protein folding. The polypeptide is Chaperonin GroEL 4 (Bradyrhizobium diazoefficiens (strain JCM 10833 / BCRC 13528 / IAM 13628 / NBRC 14792 / USDA 110)).